The following is a 336-amino-acid chain: 3-isopropylmalate dehydrogenase (336 aa).

Arg87, Arg97, Arg121, and Asp211 together coordinate substrate. 3 residues coordinate Mg(2+): Asp211, Asp235, and Asp239. 271–283 (GSAPDIAGQGIAD) provides a ligand contact to NAD(+).

This sequence belongs to the isocitrate and isopropylmalate dehydrogenases family. LeuB type 2 subfamily. In terms of assembly, homodimer. Mg(2+) serves as cofactor. The cofactor is Mn(2+).

It is found in the cytoplasm. The catalysed reaction is (2R,3S)-3-isopropylmalate + NAD(+) = 4-methyl-2-oxopentanoate + CO2 + NADH. The protein operates within amino-acid biosynthesis; L-leucine biosynthesis; L-leucine from 3-methyl-2-oxobutanoate: step 3/4. In terms of biological role, catalyzes the oxidation of 3-carboxy-2-hydroxy-4-methylpentanoate (3-isopropylmalate) to 3-carboxy-4-methyl-2-oxopentanoate. The product decarboxylates to 4-methyl-2 oxopentanoate. In Rhodococcus opacus (strain B4), this protein is 3-isopropylmalate dehydrogenase.